The primary structure comprises 373 residues: Dual-specificity RNA methyltransferase RlmN (373 aa).

Glutamate 94 functions as the Proton acceptor in the catalytic mechanism. Residues 100–339 (EDDRATLCVS…VIVRKTRGDD (240 aa)) form the Radical SAM core domain. Cysteines 107 and 344 form a disulfide. Residues cysteine 114, cysteine 118, and cysteine 121 each coordinate [4Fe-4S] cluster. S-adenosyl-L-methionine contacts are provided by residues 168–169 (GE), serine 200, 222–224 (SIH), and asparagine 301. The active-site S-methylcysteine intermediate is cysteine 344.

It belongs to the radical SAM superfamily. RlmN family. [4Fe-4S] cluster is required as a cofactor.

Its subcellular location is the cytoplasm. It carries out the reaction adenosine(2503) in 23S rRNA + 2 reduced [2Fe-2S]-[ferredoxin] + 2 S-adenosyl-L-methionine = 2-methyladenosine(2503) in 23S rRNA + 5'-deoxyadenosine + L-methionine + 2 oxidized [2Fe-2S]-[ferredoxin] + S-adenosyl-L-homocysteine. The enzyme catalyses adenosine(37) in tRNA + 2 reduced [2Fe-2S]-[ferredoxin] + 2 S-adenosyl-L-methionine = 2-methyladenosine(37) in tRNA + 5'-deoxyadenosine + L-methionine + 2 oxidized [2Fe-2S]-[ferredoxin] + S-adenosyl-L-homocysteine. Functionally, specifically methylates position 2 of adenine 2503 in 23S rRNA and position 2 of adenine 37 in tRNAs. m2A2503 modification seems to play a crucial role in the proofreading step occurring at the peptidyl transferase center and thus would serve to optimize ribosomal fidelity. The polypeptide is Dual-specificity RNA methyltransferase RlmN (Shewanella woodyi (strain ATCC 51908 / MS32)).